The sequence spans 526 residues: Transcription factor kayak (526 aa).

Disordered regions lie at residues 71–165 and 178–221; these read PPLA…GTGG and RNTN…NKQA. Low complexity-rich tracts occupy residues 78 to 87 and 133 to 153; these read NNNNNNNNNG and ISDT…HMMG. Gly residues predominate over residues 154 to 165; that stretch reads NSGGGNGGGTGG. A compositionally biased stretch (polar residues) spans 178-187; it reads RNTNTSNSAT. One can recognise a bZIP domain in the interval 208-271; the sequence is EEKRRIRRER…NQLEYFLQAH (64 aa). The segment at 210 to 229 is basic motif; it reads KRRIRRERNKQAAARCRKRR. Residues 236–264 form a leucine-zipper region; it reads LTEEVELLEKRGENLKKEMELLNETKNQL. The span at 301–322 shows a compositional bias: low complexity; that stretch reads GSCGSGSSHHNNNSNSNDSSSG. 2 disordered regions span residues 301–345 and 504–526; these read GSCG…DLKP and TSQN…LVSL. The segment covering 330–340 has biased composition (polar residues); the sequence is TLNSTGRSNSP. At Ser-339 the chain carries Phosphoserine.

The protein belongs to the bZIP family. Fos subfamily. In terms of assembly, homodimer. Heterodimer with Jra. The kay-Jra heterodimer binds more stably to the AP-1 site than either of the two proteins alone.

The protein localises to the nucleus. In terms of biological role, developmentally regulated transcription factor AP-1 binds and recognizes the enhancer DNA sequence: 5'-TGA[CG]TCA-3'. May play a role in the function or determination of a particular subset of cells in the developing embryo. It is able to carry out its function either independently of or in conjunction with Jra. This chain is Transcription factor kayak, found in Drosophila persimilis (Fruit fly).